Reading from the N-terminus, the 2167-residue chain is GTPase-activating protein BEM2/IPL2 (2167 aa).

Disordered regions lie at residues 1 to 209 (MKGL…NDNE), 243 to 305 (TNYN…ASAR), and 353 to 372 (NSSI…NNQA). The segment covering 12-51 (SSTASASSSSTSTSHKTTTASTASSSSPSSSSQTIRNSTS) has biased composition (low complexity). Residue Lys27 forms a Glycyl lysine isopeptide (Lys-Gly) (interchain with G-Cter in ubiquitin) linkage. A compositionally biased stretch (basic residues) spans 58 to 70 (HSHHHHGQGHSHH). The span at 89–118 (KQYTSTSSSQVNLGMYHSDTNTRSSRSIAS) shows a compositional bias: polar residues. Ser129 carries the post-translational modification Phosphoserine. The segment covering 134 to 145 (SNSSSQKSNAQD) has biased composition (polar residues). 2 stretches are compositionally biased toward low complexity: residues 160-177 (SLLP…SRCS) and 187-207 (NTSG…NNND). A compositionally biased stretch (polar residues) spans 243 to 252 (TNYNSSMTAP). Ser283 is subject to Phosphoserine. Residues 289–300 (SSSTTATNSGND) show a composition bias toward low complexity. One can recognise a Ras-GEF domain in the interval 592–859 (DITTLADEVH…MKLSVQHEPP (268 aa)). Phosphoserine occurs at positions 1012 and 1016. Thr1038 carries the post-translational modification Phosphothreonine. Residues Ser1046, Ser1054, and Ser1128 each carry the phosphoserine modification. Over residues 1771-1794 (ISGTHSDNDHSYNINKNTGQTPSL) the composition is skewed to polar residues. The tract at residues 1771–1828 (ISGTHSDNDHSYNINKNTGQTPSLGSVMESNNSARNRRDSRASFSTNRSSVVSNSSHN) is disordered. Over residues 1812-1828 (ASFSTNRSSVVSNSSHN) the composition is skewed to low complexity. The 103-residue stretch at 1846 to 1948 (GFNTSSSNYS…WIKMIKASKR (103 aa)) folds into the PH domain. One can recognise a Rho-GAP domain in the interval 1967-2165 (VPLEDVCERE…DFIKNPNDYF (199 aa)).

In terms of biological role, GTPase-activating protein (GAP) for RHO1 and RHO2. Involved in the control of cellular morphogenesis. Required for proper bud site selection and bud emergence. This is GTPase-activating protein BEM2/IPL2 (BEM2) from Saccharomyces cerevisiae (strain ATCC 204508 / S288c) (Baker's yeast).